The primary structure comprises 185 residues: Ribosome-recycling factor (185 aa).

Residues 136–155 (NDDLKKLEKNGDITEDELRA) form a disordered region.

This sequence belongs to the RRF family.

It is found in the cytoplasm. Its function is as follows. Responsible for the release of ribosomes from messenger RNA at the termination of protein biosynthesis. May increase the efficiency of translation by recycling ribosomes from one round of translation to another. In Bacillus velezensis (strain DSM 23117 / BGSC 10A6 / LMG 26770 / FZB42) (Bacillus amyloliquefaciens subsp. plantarum), this protein is Ribosome-recycling factor.